The primary structure comprises 25 residues: M-poneritoxin-Nc2a (25 aa).

This sequence belongs to the ponericin-L family. In terms of tissue distribution, expressed by the venom gland.

It localises to the secreted. It is found in the target cell membrane. Its function is as follows. Membrane-perturbating peptide with multiple activities. It is insecticidal, since it induces reversible paralysis in insects (L.cuprina) after 1 hour, but fails to kill them. It shows moderate antibacterial activity against some Gram-positive and Gram-negative bacteria. It is also antiparasitic, since it moderately inhibits the larval development of the major pathogenic nematode of ruminants (H.contortus, IC(50)=23.2 uM), but fails to reduce the motility of adult males of the other nematode B.malayi. It also shows moderate cytotoxic activity against HEK293 cells (EC(50)=48-57 uM) but does not induce hemolysis in human erythrocytes. It also causes a moderate increase in intracellular calcium concentration on neuronal and epithelial cell lines, which supports a non-specific membrane perturbation mechanism of action. In Neoponera commutata (Large hunting ant), this protein is M-poneritoxin-Nc2a.